A 236-amino-acid chain; its full sequence is Small ribosomal subunit protein uS3 (236 aa).

One can recognise a KH type-2 domain in the interval 39–107; it reads IREVLEKQLK…EVHLNIVEVR (69 aa). The segment at 214-236 is disordered; the sequence is ASERRALEGGDSGGGRSRRDDRG.

Belongs to the universal ribosomal protein uS3 family. Part of the 30S ribosomal subunit. Forms a tight complex with proteins S10 and S14.

Binds the lower part of the 30S subunit head. Binds mRNA in the 70S ribosome, positioning it for translation. The sequence is that of Small ribosomal subunit protein uS3 from Parvibaculum lavamentivorans (strain DS-1 / DSM 13023 / NCIMB 13966).